Consider the following 874-residue polypeptide: Alanine--tRNA ligase (874 aa).

4 residues coordinate Zn(2+): His-563, His-567, Cys-665, and His-669.

This sequence belongs to the class-II aminoacyl-tRNA synthetase family. Requires Zn(2+) as cofactor.

The protein localises to the cytoplasm. It catalyses the reaction tRNA(Ala) + L-alanine + ATP = L-alanyl-tRNA(Ala) + AMP + diphosphate. Functionally, catalyzes the attachment of alanine to tRNA(Ala) in a two-step reaction: alanine is first activated by ATP to form Ala-AMP and then transferred to the acceptor end of tRNA(Ala). Also edits incorrectly charged Ser-tRNA(Ala) and Gly-tRNA(Ala) via its editing domain. This chain is Alanine--tRNA ligase, found in Actinobacillus succinogenes (strain ATCC 55618 / DSM 22257 / CCUG 43843 / 130Z).